The sequence spans 137 residues: Transcription antitermination protein NusB (137 aa).

The protein belongs to the NusB family.

Involved in transcription antitermination. Required for transcription of ribosomal RNA (rRNA) genes. Binds specifically to the boxA antiterminator sequence of the ribosomal RNA (rrn) operons. This chain is Transcription antitermination protein NusB, found in Aeromonas hydrophila subsp. hydrophila (strain ATCC 7966 / DSM 30187 / BCRC 13018 / CCUG 14551 / JCM 1027 / KCTC 2358 / NCIMB 9240 / NCTC 8049).